The following is a 460-amino-acid chain: Diguanylate cyclase DosC (460 aa).

His98 provides a ligand contact to heme. In terms of domain architecture, GGDEF spans 325–458 (TPLSVLIIDV…GRNRVELWKA (134 aa)). Asp333 lines the Mg(2+) pocket. Substrate-binding residues include Asn341 and Asp350. Asp376 is a binding site for Mg(2+). Asp376 functions as the Proton acceptor in the catalytic mechanism.

Heme is required as a cofactor. Mg(2+) serves as cofactor.

It carries out the reaction 2 GTP = 3',3'-c-di-GMP + 2 diphosphate. It functions in the pathway purine metabolism; 3',5'-cyclic di-GMP biosynthesis. Functionally, globin-coupled heme-based oxygen sensor protein displaying diguanylate cyclase (DGC) activity in response to oxygen availability. Thus, catalyzes the synthesis of cyclic diguanylate (c-di-GMP) via the condensation of 2 GTP molecules. Cyclic-di-GMP is a second messenger which controls cell surface-associated traits in bacteria. This is Diguanylate cyclase DosC (dosC) from Shigella sonnei (strain Ss046).